We begin with the raw amino-acid sequence, 172 residues long: Translocon-associated protein subunit delta (172 aa).

A signal peptide spans 1–24 (MAALASLGALALLLLSGLSCCSEA). Cys-25 and Cys-56 are oxidised to a cystine. Residues 25–143 (CVEPQITPSY…SVDHRGTWNG (119 aa)) lie on the Lumenal side of the membrane. Lys-72 is covalently cross-linked (Glycyl lysine isopeptide (Lys-Gly) (interchain with G-Cter in ubiquitin)). The chain crosses the membrane as a helical span at residues 144–164 (PWVSTEVLAAAIGLVIYYLAF). Over 165-172 (SAKSHIQA) the chain is Cytoplasmic.

The protein belongs to the TRAP-delta family. Heterotetramer of TRAP-alpha, TRAP-beta, TRAP-delta and TRAP-gamma.

The protein resides in the endoplasmic reticulum membrane. TRAP proteins are part of a complex whose function is to bind calcium to the ER membrane and thereby regulate the retention of ER resident proteins. The chain is Translocon-associated protein subunit delta (SSR4) from Bos taurus (Bovine).